Here is a 215-residue protein sequence, read N- to C-terminus: MQEPLRVPPSAPARLVVLASGTGSLLRSLLDAAVGDYPARVVAVGVDRECRAAEIAAEASVPVFTVRLADHPSRDAWDVAITAATAAHEPDLVVSAGFMRILGPQFLSRFYGRTLNTHPALLPAFPGTHGVADALAYGVKVTGATVHLVDAGTDTGPILAQQPVPVLDGDDEETLHERIKVTERRLLVAAVAALATHGVTVVGRTATMGRKVTIG.

(6R)-10-formyltetrahydrofolate-binding positions include Arg-74, 99-102, and Asn-116; that span reads MRIL. His-118 functions as the Proton donor in the catalytic mechanism.

Belongs to the GART family.

It catalyses the reaction N(1)-(5-phospho-beta-D-ribosyl)glycinamide + (6R)-10-formyltetrahydrofolate = N(2)-formyl-N(1)-(5-phospho-beta-D-ribosyl)glycinamide + (6S)-5,6,7,8-tetrahydrofolate + H(+). The protein operates within purine metabolism; IMP biosynthesis via de novo pathway; N(2)-formyl-N(1)-(5-phospho-D-ribosyl)glycinamide from N(1)-(5-phospho-D-ribosyl)glycinamide (10-formyl THF route): step 1/1. Its function is as follows. Catalyzes the transfer of a formyl group from 10-formyltetrahydrofolate to 5-phospho-ribosyl-glycinamide (GAR), producing 5-phospho-ribosyl-N-formylglycinamide (FGAR) and tetrahydrofolate. The protein is Phosphoribosylglycinamide formyltransferase of Mycobacterium tuberculosis (strain CDC 1551 / Oshkosh).